Here is a 277-residue protein sequence, read N- to C-terminus: Type IV methyl-directed restriction enzyme EcoKMcrA (277 aa).

The 51-residue stretch at 207–257 (CENCGKNAPFYLNDGNPYLEVHHVIPLSSGGADTTDNCVALCPNCHRELHY) folds into the HNH domain.

Functionally, restriction of 5-methyl and 5-hydroxymethylcytosines at the specific DNA sequence 5'-C(me)CGG-3'. The polypeptide is Type IV methyl-directed restriction enzyme EcoKMcrA (Escherichia coli (strain K12)).